The primary structure comprises 1165 residues: Phenyloxazoline synthase MbtB (1165 aa).

In terms of domain architecture, Carrier 1 spans 5-78 (PARSEDIREE…AWAQLVTAGR (74 aa)). Ser-39 is modified (O-(pantetheine 4'-phosphoryl)serine). Positions 77 to 100 (GRQDTDSAAPPADSSGDPSGETEP) are disordered. The interval 97–393 (ETEPFALAPM…SSLLLDVDLV (297 aa)) is condensation/cyclization. The tract at residues 578-973 (SYAQLRDQAL…RVPGVRTAVA (396 aa)) is adenylation. One can recognise a Carrier 2 domain in the interval 1055 to 1131 (AASTPLEGAL…ALAAVLRAAE (77 aa)). Ser-1090 is modified (O-(pantetheine 4'-phosphoryl)serine).

This sequence belongs to the ATP-dependent AMP-binding enzyme family. MbtB subfamily. It depends on pantetheine 4'-phosphate as a cofactor. In terms of processing, 4'-phosphopantetheine is transferred from CoA to a specific serine in each of the two carrier protein domains, leading to their activation from apo to holo forms.

It functions in the pathway siderophore biosynthesis; mycobactin biosynthesis. In terms of biological role, involved in the initial steps of the mycobactin biosynthetic pathway. Putatively couples activated salicylic acid with serine or threonine and cyclizes this precursor to the hydroxyphenyloxazoline ring system present in this class of siderophores. This Mycolicibacterium paratuberculosis (strain ATCC BAA-968 / K-10) (Mycobacterium paratuberculosis) protein is Phenyloxazoline synthase MbtB (mbtB).